We begin with the raw amino-acid sequence, 157 residues long: 2-C-methyl-D-erythritol 2,4-cyclodiphosphate synthase (157 aa).

A divalent metal cation is bound by residues Asp-8 and His-10. 4-CDP-2-C-methyl-D-erythritol 2-phosphate is bound by residues 8–10 (DIH) and 34–35 (HS). A divalent metal cation is bound at residue His-42. 4-CDP-2-C-methyl-D-erythritol 2-phosphate contacts are provided by residues 56–58 (DIG), 61–65 (FPDTD), 132–135 (TTNE), and Arg-142.

It belongs to the IspF family. In terms of assembly, homotrimer. The cofactor is a divalent metal cation.

The enzyme catalyses 4-CDP-2-C-methyl-D-erythritol 2-phosphate = 2-C-methyl-D-erythritol 2,4-cyclic diphosphate + CMP. The protein operates within isoprenoid biosynthesis; isopentenyl diphosphate biosynthesis via DXP pathway; isopentenyl diphosphate from 1-deoxy-D-xylulose 5-phosphate: step 4/6. Functionally, involved in the biosynthesis of isopentenyl diphosphate (IPP) and dimethylallyl diphosphate (DMAPP), two major building blocks of isoprenoid compounds. Catalyzes the conversion of 4-diphosphocytidyl-2-C-methyl-D-erythritol 2-phosphate (CDP-ME2P) to 2-C-methyl-D-erythritol 2,4-cyclodiphosphate (ME-CPP) with a corresponding release of cytidine 5-monophosphate (CMP). In Chloroherpeton thalassium (strain ATCC 35110 / GB-78), this protein is 2-C-methyl-D-erythritol 2,4-cyclodiphosphate synthase.